A 423-amino-acid chain; its full sequence is tRNA-dihydrouridine(16/17) synthase [NAD(P)(+)] (423 aa).

T2 carries the N-acetylthreonine modification. FMN is bound by residues 35 to 37 (PMV) and Q92. Catalysis depends on C121, which acts as the Proton donor. FMN is bound by residues K160, H188, 223-225 (NGN), and 247-248 (AE). Residues 404 to 423 (KKRKADVPLESADKKKDVKA) are disordered. The segment covering 408 to 423 (ADVPLESADKKKDVKA) has biased composition (basic and acidic residues).

Belongs to the Dus family. Dus1 subfamily. As to quaternary structure, monomer. Requires FMN as cofactor.

The catalysed reaction is 5,6-dihydrouridine(16) in tRNA + NADP(+) = uridine(16) in tRNA + NADPH + H(+). The enzyme catalyses 5,6-dihydrouridine(16) in tRNA + NAD(+) = uridine(16) in tRNA + NADH + H(+). It catalyses the reaction 5,6-dihydrouridine(17) in tRNA + NAD(+) = uridine(17) in tRNA + NADH + H(+). It carries out the reaction 5,6-dihydrouridine(17) in tRNA + NADP(+) = uridine(17) in tRNA + NADPH + H(+). The catalysed reaction is a 5,6-dihydrouridine in mRNA + NAD(+) = a uridine in mRNA + NADH + H(+). The enzyme catalyses a 5,6-dihydrouridine in mRNA + NADP(+) = a uridine in mRNA + NADPH + H(+). In terms of biological role, catalyzes the synthesis of dihydrouridine, a modified base found in the D-loop of most tRNAs. Specifically modifies U16 and U17 in cytoplasmic tRNAs. Also able to mediate dihydrouridylation of some mRNAs, thereby affecting their translation. The sequence is that of tRNA-dihydrouridine(16/17) synthase [NAD(P)(+)] from Saccharomyces cerevisiae (strain ATCC 204508 / S288c) (Baker's yeast).